The following is a 124-amino-acid chain: Ribulose bisphosphate carboxylase small subunit (124 aa).

Belongs to the RuBisCO small chain family. Heterohexadecamer of 8 large and 8 small subunits.

RuBisCO catalyzes two reactions: the carboxylation of D-ribulose 1,5-bisphosphate, the primary event in carbon dioxide fixation, as well as the oxidative fragmentation of the pentose substrate. Both reactions occur simultaneously and in competition at the same active site. Although the small subunit is not catalytic it is essential for maximal activity. The protein is Ribulose bisphosphate carboxylase small subunit of Hydrogenophilus thermoluteolus (Pseudomonas hydrogenothermophila).